The sequence spans 324 residues: Phosphomevalonate decarboxylase (324 aa).

Belongs to the phosphomevalonate decarboxylase family.

It catalyses the reaction (R)-5-phosphomevalonate + ATP = isopentenyl phosphate + ADP + phosphate + CO2. Is strongly inhibited by 6-fluoromevalonate monophosphate but shows negligible inhibition by 6-fluoromevalonate diphosphate (a potent inhibitor of the classical mevalonate pathway). Catalyzes the decarboxylation of mevalonate 5-phosphate (MVAP) to isopentenyl phosphate (IP). Functions in an alternate mevalonate (MVA) pathway leading to isopentenyl diphosphate (IPP), a key precursor for the biosynthesis of isoprenoid compounds such as archaeal membrane lipids. The sequence is that of Phosphomevalonate decarboxylase (mvaD) from Haloferax volcanii (strain ATCC 29605 / DSM 3757 / JCM 8879 / NBRC 14742 / NCIMB 2012 / VKM B-1768 / DS2) (Halobacterium volcanii).